Consider the following 37-residue polypeptide: L-amino-acid oxidase (37 aa).

It belongs to the flavin monoamine oxidase family. FIG1 subfamily. Homodimer; non-covalently linked. FAD serves as cofactor. Post-translationally, N-Glycosylated. As to expression, expressed by the venom gland.

Its subcellular location is the secreted. It catalyses the reaction an L-alpha-amino acid + O2 + H2O = a 2-oxocarboxylate + H2O2 + NH4(+). It carries out the reaction L-leucine + O2 + H2O = 4-methyl-2-oxopentanoate + H2O2 + NH4(+). The enzyme catalyses L-phenylalanine + O2 + H2O = 3-phenylpyruvate + H2O2 + NH4(+). The catalysed reaction is L-tryptophan + O2 + H2O = indole-3-pyruvate + H2O2 + NH4(+). It catalyses the reaction L-methionine + O2 + H2O = 4-methylsulfanyl-2-oxobutanoate + H2O2 + NH4(+). It carries out the reaction L-isoleucine + O2 + H2O = (S)-3-methyl-2-oxopentanoate + H2O2 + NH4(+). The enzyme catalyses L-arginine + O2 + H2O = 5-guanidino-2-oxopentanoate + H2O2 + NH4(+). The catalysed reaction is L-histidine + O2 + H2O = 3-(imidazol-5-yl)pyruvate + H2O2 + NH4(+). It catalyses the reaction L-valine + O2 + H2O = 3-methyl-2-oxobutanoate + H2O2 + NH4(+). In terms of biological role, catalyzes an oxidative deamination of predominantly hydrophobic and aromatic L-amino acids, thus producing hydrogen peroxide that may contribute to the diverse toxic effects of this enzyme. Is highly active on L-Leu, L-Met, moderately active on L-Arg, L-Trp, L-Phe, L-Val, L-His, and L-Ile, and is weakly or not active on L-Cys, L-Lys, L-Ala, L-Thr, L-Asp, L-Ser, and L-Pro. Exhibits diverse biological activities, such as hemorrhage, edema, apoptosis of vascular endothelial cells or tumor cell lines, as well as regulation of platelet aggregation. Effects of snake L-amino oxidases on platelets are controversial, since they either induce aggregation or inhibit agonist-induced aggregation. These different effects are probably due to different experimental conditions. This protein induce hemolysis and has antibacterial and antiparasitic activities (against the Gram-positive S.aureus). Tested in vivo, this protein significantly inhibits Ehrlich ascite tumors growth and induces an influx of polymorphonuclear cells, as well as spontaneous liberation of hydrogen peroxide from peritoneal macrophages. This Bothrops jararaca (Jararaca) protein is L-amino-acid oxidase.